Reading from the N-terminus, the 319-residue chain is ATP-dependent 6-phosphofructokinase (319 aa).

Residue G11 participates in ATP binding. R21–R25 provides a ligand contact to ADP. ATP is bound by residues R72 to C73 and G102 to S105. D103 lines the Mg(2+) pocket. T125–D127 is a binding site for substrate. D127 (proton acceptor) is an active-site residue. ADP is bound at residue R154. Substrate-binding positions include R162 and M169–R171. ADP-binding positions include G185–E187, R211, and K213–H215. Substrate-binding positions include E222, R243, and H249–R252.

It belongs to the phosphofructokinase type A (PFKA) family. ATP-dependent PFK group I subfamily. Prokaryotic clade 'B1' sub-subfamily. Homotetramer. Mg(2+) serves as cofactor.

The protein resides in the cytoplasm. It catalyses the reaction beta-D-fructose 6-phosphate + ATP = beta-D-fructose 1,6-bisphosphate + ADP + H(+). Its pathway is carbohydrate degradation; glycolysis; D-glyceraldehyde 3-phosphate and glycerone phosphate from D-glucose: step 3/4. Allosterically activated by ADP and other diphosphonucleosides, and allosterically inhibited by phosphoenolpyruvate. Catalyzes the phosphorylation of D-fructose 6-phosphate to fructose 1,6-bisphosphate by ATP, the first committing step of glycolysis. This is ATP-dependent 6-phosphofructokinase from Clostridium novyi (strain NT).